The sequence spans 319 residues: Probable cystathionine gamma-synthase (319 aa).

Lys197 is modified (N6-(pyridoxal phosphate)lysine).

The protein belongs to the trans-sulfuration enzymes family. In terms of assembly, homotetramer. Requires pyridoxal 5'-phosphate as cofactor.

Its subcellular location is the cytoplasm. The catalysed reaction is O-succinyl-L-homoserine + L-cysteine = L,L-cystathionine + succinate + H(+). Its function is as follows. Catalyzes the formation of L-cystathionine from O-succinyl-L-homoserine (OSHS) and L-cysteine, via a gamma-replacement reaction. In the absence of thiol, catalyzes gamma-elimination to form 2-oxobutanoate, succinate and ammonia. This Herpetosiphon aurantiacus (Herpetosiphon giganteus) protein is Probable cystathionine gamma-synthase (metB).